We begin with the raw amino-acid sequence, 179 residues long: Protein U (179 aa).

The first 25 residues, 1–25 (MNAIKTAVAAVTAAASLVAFSPAEA), serve as a signal peptide directing secretion.

It is found in the secreted. The protein localises to the spore. Its subcellular location is the perispore. Functionally, a late-developmental spore coat protein. In Myxococcus xanthus, this protein is Protein U (pru).